Consider the following 891-residue polypeptide: DNA mismatch repair protein MutS (891 aa).

G646–S653 serves as a coordination point for ATP.

It belongs to the DNA mismatch repair MutS family.

Functionally, this protein is involved in the repair of mismatches in DNA. It is possible that it carries out the mismatch recognition step. This protein has a weak ATPase activity. The sequence is that of DNA mismatch repair protein MutS from Rickettsia massiliae (strain Mtu5).